Consider the following 425-residue polypeptide: Trigger factor (425 aa).

The 86-residue stretch at 163 to 248 (GDTAVIDFEG…VHEIKTKELP (86 aa)) folds into the PPIase FKBP-type domain.

Belongs to the FKBP-type PPIase family. Tig subfamily.

The protein resides in the cytoplasm. It carries out the reaction [protein]-peptidylproline (omega=180) = [protein]-peptidylproline (omega=0). Its function is as follows. Involved in protein export. Acts as a chaperone by maintaining the newly synthesized protein in an open conformation. Functions as a peptidyl-prolyl cis-trans isomerase. This is Trigger factor from Bacillus cereus (strain ATCC 10987 / NRS 248).